The following is a 270-amino-acid chain: MRADIVTIFPAYLEPLRLSLVGRAQEHGTLQIHTHDLRMWTTDVHRTVDDAPYGGGPGMVMRPEPWDAALSQITARVADSRPRVVVPTPAGTPFTQRHAEELAREPWLVFCCGRYEGIDARVIETWADDEISIGDYVLAGGEAATLVILEAVTRLLPGVLGNSASVADDSFSDGLLEGPVYTRPPVWRGTEVPPVLRSGDHEAIARWRRSQALRRTLLRRPDLLEHREFAEADRVVLAAAAAEAAGRMLPAPTEGTGLIHHRDVEGPGEG.

Residues glycine 113 and 133–138 (IGDYVL) each bind S-adenosyl-L-methionine. Positions 251–270 (APTEGTGLIHHRDVEGPGEG) are disordered. Over residues 260-270 (HHRDVEGPGEG) the composition is skewed to basic and acidic residues.

The protein belongs to the RNA methyltransferase TrmD family. As to quaternary structure, homodimer.

The protein resides in the cytoplasm. The catalysed reaction is guanosine(37) in tRNA + S-adenosyl-L-methionine = N(1)-methylguanosine(37) in tRNA + S-adenosyl-L-homocysteine + H(+). Its function is as follows. Specifically methylates guanosine-37 in various tRNAs. In Frankia casuarinae (strain DSM 45818 / CECT 9043 / HFP020203 / CcI3), this protein is tRNA (guanine-N(1)-)-methyltransferase.